The sequence spans 138 residues: Basic phospholipase A2 BP-II (138 aa).

Positions 1-16 are cleaved as a signal peptide; the sequence is MRTLWIMAVLLVGVDG. Cystine bridges form between Cys-42–Cys-132, Cys-44–Cys-60, Cys-59–Cys-112, Cys-65–Cys-138, Cys-66–Cys-105, Cys-73–Cys-98, and Cys-91–Cys-103. 2 residues coordinate Ca(2+): Gly-45 and Gly-47. His-63 is an active-site residue. Asp-106 is a catalytic residue.

The protein belongs to the phospholipase A2 family. Group II subfamily. K49 sub-subfamily. As to quaternary structure, exists as a monomer in both solution and crystal states. In the presence of SDS or probably in the presence of phospholipids, assembles to form SDS-resistant stable oligomers. It depends on Ca(2+) as a cofactor. Expressed by the venom gland.

It is found in the secreted. The catalysed reaction is a 1,2-diacyl-sn-glycero-3-phosphocholine + H2O = a 1-acyl-sn-glycero-3-phosphocholine + a fatty acid + H(+). Its function is as follows. Snake venom phospholipase A2 (PLA2) that shows anticoagulant activities, strong myolytic activity, infiltration of polymorphonuclear cells, and edema in stromal tissues. Induces cell death of Jurkat cells in a concentration-dependent manner. Shows a low phospholipase A2 activity. PLA2 catalyzes the calcium-dependent hydrolysis of the 2-acyl groups in 3-sn-phosphoglycerides. This is Basic phospholipase A2 BP-II from Protobothrops flavoviridis (Habu).